A 116-amino-acid polypeptide reads, in one-letter code: Probable transcriptional regulator WhiB6 (116 aa).

Residues cysteine 12, cysteine 53, cysteine 56, and cysteine 62 each coordinate [4Fe-4S] cluster. In terms of domain architecture, 4Fe-4S Wbl-type spans 33 to 86 (VCTQDPDRWTTTPDDEAKTLCRACPRRWLCARDAVESAGAEGLWAGVVIPESGR).

This sequence belongs to the WhiB family. It depends on [4Fe-4S] cluster as a cofactor. The Fe-S cluster can be nitrosylated by nitric oxide (NO). Post-translationally, upon Fe-S cluster removal intramolecular disulfide bonds are formed.

The protein localises to the cytoplasm. Its function is as follows. Acts as a transcriptional regulator. Probably redox-responsive. The apo- but not holo-form probably binds DNA. This chain is Probable transcriptional regulator WhiB6 (whiB6), found in Mycobacterium tuberculosis (strain CDC 1551 / Oshkosh).